The chain runs to 79 residues: MSEIGERVKKIVVEHLGVEPEKVVDNASFIDDLGADSLDTVELVMAFEEEFGCEIPDDAAETILTVGDATKFLEKNAKS.

The 76-residue stretch at 2 to 77 (SEIGERVKKI…DATKFLEKNA (76 aa)) folds into the Carrier domain. At serine 37 the chain carries O-(pantetheine 4'-phosphoryl)serine.

It belongs to the acyl carrier protein (ACP) family. Post-translationally, 4'-phosphopantetheine is transferred from CoA to a specific serine of apo-ACP by AcpS. This modification is essential for activity because fatty acids are bound in thioester linkage to the sulfhydryl of the prosthetic group.

It is found in the cytoplasm. Its pathway is lipid metabolism; fatty acid biosynthesis. Carrier of the growing fatty acid chain in fatty acid biosynthesis. This is Acyl carrier protein from Nitrobacter hamburgensis (strain DSM 10229 / NCIMB 13809 / X14).